The following is a 139-amino-acid chain: Putative pre-16S rRNA nuclease (139 aa).

The protein belongs to the YqgF nuclease family.

The protein localises to the cytoplasm. Could be a nuclease involved in processing of the 5'-end of pre-16S rRNA. The polypeptide is Putative pre-16S rRNA nuclease (Streptococcus pyogenes serotype M2 (strain MGAS10270)).